Reading from the N-terminus, the 272-residue chain is Insulin-like growth factor-binding protein 1 (272 aa).

A signal peptide spans 1–25; that stretch reads MPEFLTVVSWPFLILLSFQIGVAAG. The IGFBP N-terminal domain maps to 28-109; that stretch reads QPWHCAPCTA…TRGQGACVPE (82 aa). 6 disulfide bridges follow: Cys32-Cys59, Cys35-Cys61, Cys43-Cys62, Cys50-Cys65, Cys73-Cys86, and Cys80-Cys106. 3 positions are modified to phosphoserine: Ser139, Ser157, and Ser169. Residue Thr170 is modified to Phosphothreonine. At Tyr171 the chain carries Phosphotyrosine. In terms of domain architecture, Thyroglobulin type-1 spans 186-264; it reads KEPCQRELYK…SLETRGDPNC (79 aa). Cystine bridges form between Cys189/Cys219, Cys230/Cys241, and Cys243/Cys264. A Phosphoserine modification is found at Ser255. A Cell attachment site motif is present at residues 259 to 261; it reads RGD.

In terms of assembly, binds equally well IGF1 and IGF2. Interacts with integrin ITGA5:ITGB1. Interacts with VHL; this interaction inhibits HIF1A degradation.

It localises to the secreted. Its function is as follows. Multifunctional protein that plays a critical role in regulating the availability of IGFs such as IGF1 and IGF2 to their receptors and thereby regulates IGF-mediated cellular processes including cell migration, proliferation, differentiation or apoptosis in a cell-type specific manner. Also plays a positive role in cell migration by interacting with integrin ITGA5:ITGB1 through its RGD motif. Mechanistically, binding to integrins leads to activation of focal adhesion kinase/PTK2 and stimulation of the mitogen-activated protein kinase (MAPK) pathway. Regulates cardiomyocyte apoptosis by suppressing HIF-1alpha/HIF1A ubiquitination and subsequent degradation. This Mus musculus (Mouse) protein is Insulin-like growth factor-binding protein 1 (Igfbp1).